The sequence spans 189 residues: Large ribosomal subunit protein bL9 (189 aa).

Belongs to the bacterial ribosomal protein bL9 family.

Binds to the 23S rRNA. This Brucella melitensis biotype 2 (strain ATCC 23457) protein is Large ribosomal subunit protein bL9.